The primary structure comprises 436 residues: Ribosomal protein uS12 methylthiotransferase RimO (436 aa).

Positions 4 to 122 (KRIDIITLGC…LLQDLGKTYH (119 aa)) constitute an MTTase N-terminal domain. Positions 13, 51, 85, 146, 150, and 153 each coordinate [4Fe-4S] cluster. Residues 132 to 363 (TTPKHYAYLK…MDIQQGISAE (232 aa)) enclose the Radical SAM core domain. Positions 366–433 (AAKIGQQMKV…DFDLYAKILN (68 aa)) constitute a TRAM domain.

Belongs to the methylthiotransferase family. RimO subfamily. The cofactor is [4Fe-4S] cluster.

Its subcellular location is the cytoplasm. The catalysed reaction is L-aspartate(89)-[ribosomal protein uS12]-hydrogen + (sulfur carrier)-SH + AH2 + 2 S-adenosyl-L-methionine = 3-methylsulfanyl-L-aspartate(89)-[ribosomal protein uS12]-hydrogen + (sulfur carrier)-H + 5'-deoxyadenosine + L-methionine + A + S-adenosyl-L-homocysteine + 2 H(+). In terms of biological role, catalyzes the methylthiolation of an aspartic acid residue of ribosomal protein uS12. The protein is Ribosomal protein uS12 methylthiotransferase RimO of Bacteroides thetaiotaomicron (strain ATCC 29148 / DSM 2079 / JCM 5827 / CCUG 10774 / NCTC 10582 / VPI-5482 / E50).